A 424-amino-acid polypeptide reads, in one-letter code: G1/S-specific cyclin-E (424 aa).

The disordered stretch occupies residues 1–25 (MSRRSGRLQSRQDNQPLTECISDEN). Residues 7 to 17 (RLQSRQDNQPL) show a composition bias toward polar residues. The residue at position 411 (Thr-411) is a Phosphothreonine.

The protein belongs to the cyclin family. Cyclin E subfamily. In terms of assembly, interacts with a member of the CDK2/CDK protein kinases to form a serine/threonine kinase holoenzyme complex. The cyclin subunit imparts substrate specificity to the complex.

It is found in the nucleus. Essential for the control of the cell cycle at the G1/S (start) transition. This chain is G1/S-specific cyclin-E (CYCE), found in Hemicentrotus pulcherrimus (Sea urchin).